Here is a 264-residue protein sequence, read N- to C-terminus: Tropinone reductase homolog At5g06060 (264 aa).

15-39 contributes to the NADP(+) binding site; sequence LVTGGTRGIGRAVVEELAKFGAKVH. Residue Ser148 participates in substrate binding. The Proton acceptor role is filled by Tyr161.

Belongs to the short-chain dehydrogenases/reductases (SDR) family. SDR65C subfamily.

In Arabidopsis thaliana (Mouse-ear cress), this protein is Tropinone reductase homolog At5g06060.